A 310-amino-acid chain; its full sequence is Mitochondrial citrate transporter E (310 aa).

Solcar repeat units follow at residues 2 to 95 (STTT…LRQG), 107 to 199 (QSLG…AKRR), and 208 to 293 (DGPG…TNKI). 6 helical membrane passes run 8–28 (FIAG…FETV), 72–92 (GSAY…YEPL), 114–133 (LAGA…FFLV), 178–198 (AMVR…FAKR), 211–228 (GLHL…CCVM), and 265–286 (IYKG…TLSL).

The protein belongs to the mitochondrial carrier (TC 2.A.29) family.

It localises to the mitochondrion inner membrane. Its function is as follows. Mitochondrial transporter that does not mediate citrate export from mitochondria to cytoplasm. Its exact function has still to be determined. This chain is Mitochondrial citrate transporter E, found in Aspergillus niger (strain ATCC 1015 / CBS 113.46 / FGSC A1144 / LSHB Ac4 / NCTC 3858a / NRRL 328 / USDA 3528.7).